A 197-amino-acid chain; its full sequence is Glycerol-3-phosphate acyltransferase (197 aa).

A run of 4 helical transmembrane segments spans residues L5–I25, L70–G90, V111–L131, and I153–F173.

This sequence belongs to the PlsY family. Probably interacts with PlsX.

Its subcellular location is the cell membrane. It catalyses the reaction an acyl phosphate + sn-glycerol 3-phosphate = a 1-acyl-sn-glycero-3-phosphate + phosphate. The protein operates within lipid metabolism; phospholipid metabolism. In terms of biological role, catalyzes the transfer of an acyl group from acyl-phosphate (acyl-PO(4)) to glycerol-3-phosphate (G3P) to form lysophosphatidic acid (LPA). This enzyme utilizes acyl-phosphate as fatty acyl donor, but not acyl-CoA or acyl-ACP. The polypeptide is Glycerol-3-phosphate acyltransferase (Geobacillus sp. (strain WCH70)).